Reading from the N-terminus, the 374-residue chain is Methylthioribose-1-phosphate isomerase (374 aa).

Serine 2 carries the post-translational modification N-acetylserine. Aspartate 253 functions as the Proton donor in the catalytic mechanism.

The protein belongs to the eIF-2B alpha/beta/delta subunits family. MtnA subfamily.

It is found in the cytoplasm. It localises to the nucleus. The catalysed reaction is 5-(methylsulfanyl)-alpha-D-ribose 1-phosphate = 5-(methylsulfanyl)-D-ribulose 1-phosphate. It functions in the pathway amino-acid biosynthesis; L-methionine biosynthesis via salvage pathway; L-methionine from S-methyl-5-thio-alpha-D-ribose 1-phosphate: step 1/6. In terms of biological role, catalyzes the interconversion of methylthioribose-1-phosphate (MTR-1-P) into methylthioribulose-1-phosphate (MTRu-1-P). The chain is Methylthioribose-1-phosphate isomerase from Arabidopsis thaliana (Mouse-ear cress).